A 697-amino-acid chain; its full sequence is Phenylalanine--tRNA ligase beta subunit, chloroplastic (697 aa).

Positions 283-368 constitute a B5 domain; that stretch reads NISRILFIDK…RIYGFDNFIS (86 aa). Aspartate 346, aspartate 352, glutamate 355, and glutamate 356 together coordinate Mg(2+). One can recognise an FDX-ACB domain in the interval 609–697; it reads SSYPSLTRDI…IDDLLNEYKL (89 aa).

The protein belongs to the phenylalanyl-tRNA synthetase beta subunit family. Type 1 subfamily. As to quaternary structure, tetramer of two alpha and two beta subunits. The cofactor is Mg(2+).

It localises to the plastid. Its subcellular location is the chloroplast. The enzyme catalyses tRNA(Phe) + L-phenylalanine + ATP = L-phenylalanyl-tRNA(Phe) + AMP + diphosphate + H(+). The polypeptide is Phenylalanine--tRNA ligase beta subunit, chloroplastic (Gracilaria tenuistipitata var. liui (Red alga)).